We begin with the raw amino-acid sequence, 101 residues long: Interleukin-8 (101 aa).

The N-terminal stretch at 1 to 22 is a signal peptide; the sequence is MTSKLAVALLAAFLLSAALCEA. Position 27 is a citrulline (Arg-27). Intrachain disulfides connect Cys-34–Cys-61 and Cys-36–Cys-77.

It belongs to the intercrine alpha (chemokine CxC) family. Homodimer. Interacts with TNFAIP6 (via Link domain); this interaction interferes with chemokine binding to glycosaminoglycans. In terms of processing, citrullination at Arg-27 prevents proteolysis, and dampens tissue inflammation, it also enhances leukocytosis, possibly through impaired chemokine clearance from the blood circulation.

Its subcellular location is the secreted. Functionally, chemotactic factor that mediates inflammatory response by attracting neutrophils, basophils, and T-cells to clear pathogens and protect the host from infection. Also plays an important role in neutrophil activation. Released in response to an inflammatory stimulus, exerts its effect by binding to the G-protein-coupled receptors CXCR1 and CXCR2, primarily found in neutrophils, monocytes and endothelial cells. G-protein heterotrimer (alpha, beta, gamma subunits) constitutively binds to CXCR1/CXCR2 receptor and activation by IL8 leads to beta and gamma subunits release from Galpha (GNAI2 in neutrophils) and activation of several downstream signaling pathways including PI3K and MAPK pathways. The protein is Interleukin-8 (CXCL8) of Ovis aries (Sheep).